The following is a 388-amino-acid chain: Succinate--CoA ligase [ADP-forming] subunit beta (388 aa).

The region spanning 9-244 (KEILRKFGVA…LDEEDPAEIE (236 aa)) is the ATP-grasp domain. ATP-binding positions include Lys46, 53-55 (GRG), Glu99, Ala102, and Glu107. Mg(2+)-binding residues include Asn199 and Asp213. Substrate-binding positions include Asn264 and 321–323 (GIM).

The protein belongs to the succinate/malate CoA ligase beta subunit family. In terms of assembly, heterotetramer of two alpha and two beta subunits. The cofactor is Mg(2+).

It catalyses the reaction succinate + ATP + CoA = succinyl-CoA + ADP + phosphate. It carries out the reaction GTP + succinate + CoA = succinyl-CoA + GDP + phosphate. Its pathway is carbohydrate metabolism; tricarboxylic acid cycle; succinate from succinyl-CoA (ligase route): step 1/1. Succinyl-CoA synthetase functions in the citric acid cycle (TCA), coupling the hydrolysis of succinyl-CoA to the synthesis of either ATP or GTP and thus represents the only step of substrate-level phosphorylation in the TCA. The beta subunit provides nucleotide specificity of the enzyme and binds the substrate succinate, while the binding sites for coenzyme A and phosphate are found in the alpha subunit. This is Succinate--CoA ligase [ADP-forming] subunit beta from Burkholderia cenocepacia (strain ATCC BAA-245 / DSM 16553 / LMG 16656 / NCTC 13227 / J2315 / CF5610) (Burkholderia cepacia (strain J2315)).